The sequence spans 243 residues: Ubiquinone/menaquinone biosynthesis C-methyltransferase UbiE (243 aa).

S-adenosyl-L-methionine-binding positions include threonine 69, aspartate 90, and 116–117 (DA).

Belongs to the class I-like SAM-binding methyltransferase superfamily. MenG/UbiE family.

The enzyme catalyses a 2-demethylmenaquinol + S-adenosyl-L-methionine = a menaquinol + S-adenosyl-L-homocysteine + H(+). The catalysed reaction is a 2-methoxy-6-(all-trans-polyprenyl)benzene-1,4-diol + S-adenosyl-L-methionine = a 5-methoxy-2-methyl-3-(all-trans-polyprenyl)benzene-1,4-diol + S-adenosyl-L-homocysteine + H(+). It functions in the pathway quinol/quinone metabolism; menaquinone biosynthesis; menaquinol from 1,4-dihydroxy-2-naphthoate: step 2/2. It participates in cofactor biosynthesis; ubiquinone biosynthesis. Functionally, methyltransferase required for the conversion of demethylmenaquinol (DMKH2) to menaquinol (MKH2) and the conversion of 2-polyprenyl-6-methoxy-1,4-benzoquinol (DDMQH2) to 2-polyprenyl-3-methyl-6-methoxy-1,4-benzoquinol (DMQH2). The chain is Ubiquinone/menaquinone biosynthesis C-methyltransferase UbiE from Paraburkholderia phymatum (strain DSM 17167 / CIP 108236 / LMG 21445 / STM815) (Burkholderia phymatum).